The sequence spans 516 residues: Flavonoid 3',5'-hydroxylase (516 aa).

Position 453 (Cys-453) interacts with heme.

This sequence belongs to the cytochrome P450 family. Requires heme as cofactor.

It catalyses the reaction a 3',5'-unsubstituted flavanone + 2 reduced [NADPH--hemoprotein reductase] + 2 O2 = a 3',5'-dihydroxyflavanone + 2 oxidized [NADPH--hemoprotein reductase] + 2 H2O + 2 H(+). The protein operates within pigment biosynthesis; anthocyanin biosynthesis. In terms of biological role, catalyzes the 3'5'-hydroxylation of naringenin and eriodictyol to form 5,7,3,'4',5'-pentahydroxyflavanone and 3',5'-hydroxylation of dihydrokaempferol and dihydroquercetin to form dihydromyricetin. The sequence is that of Flavonoid 3',5'-hydroxylase (CYP75A4) from Gentiana triflora (Clustered gentian).